The following is a 703-amino-acid chain: Ion-translocating oxidoreductase complex subunit C (703 aa).

2 consecutive 4Fe-4S ferredoxin-type domains span residues 369–398 (YDPQ…QQMY) and 408–437 (KSNQ…IQYF). Residues Cys-378, Cys-381, Cys-384, Cys-388, Cys-417, Cys-420, Cys-423, and Cys-427 each coordinate [4Fe-4S] cluster. Disordered regions lie at residues 467–542 (RLER…PDNS) and 555–680 (RQQT…PKKA). The span at 485 to 497 (ARREELAANKGED) shows a compositional bias: basic and acidic residues. Residues 559–577 (NGNSPVSSASNSDSATISA) are compositionally biased toward low complexity. A compositionally biased stretch (polar residues) spans 578-592 (DNTHSTPKTAQNQTA). 2 stretches are compositionally biased toward low complexity: residues 598–629 (AAVA…TEKT) and 641–669 (AAVA…EKTA).

Belongs to the 4Fe4S bacterial-type ferredoxin family. RnfC subfamily. As to quaternary structure, the complex is composed of six subunits: RnfA, RnfB, RnfC, RnfD, RnfE and RnfG. [4Fe-4S] cluster serves as cofactor.

It is found in the cell inner membrane. Functionally, part of a membrane-bound complex that couples electron transfer with translocation of ions across the membrane. This Actinobacillus succinogenes (strain ATCC 55618 / DSM 22257 / CCUG 43843 / 130Z) protein is Ion-translocating oxidoreductase complex subunit C.